The sequence spans 390 residues: S-adenosylmethionine synthase (390 aa).

An ATP-binding site is contributed by His17. Residue Asp19 participates in Mg(2+) binding. Residue Glu45 participates in K(+) binding. L-methionine-binding residues include Glu58 and Gln101. The tract at residues 101–111 (QSPDIGQGVDT) is flexible loop. ATP contacts are provided by residues 160-162 (DGK), 226-227 (RF), Asp235, 241-242 (RK), Ala258, and Lys262. Asp235 lines the L-methionine pocket. An L-methionine-binding site is contributed by Lys266.

It belongs to the AdoMet synthase family. Homotetramer; dimer of dimers. Mg(2+) is required as a cofactor. K(+) serves as cofactor.

Its subcellular location is the cytoplasm. It carries out the reaction L-methionine + ATP + H2O = S-adenosyl-L-methionine + phosphate + diphosphate. It functions in the pathway amino-acid biosynthesis; S-adenosyl-L-methionine biosynthesis; S-adenosyl-L-methionine from L-methionine: step 1/1. Its function is as follows. Catalyzes the formation of S-adenosylmethionine (AdoMet) from methionine and ATP. The overall synthetic reaction is composed of two sequential steps, AdoMet formation and the subsequent tripolyphosphate hydrolysis which occurs prior to release of AdoMet from the enzyme. This Anaeromyxobacter dehalogenans (strain 2CP-1 / ATCC BAA-258) protein is S-adenosylmethionine synthase.